The sequence spans 158 residues: Small ribosomal subunit protein uS7 (158 aa).

Belongs to the universal ribosomal protein uS7 family. As to quaternary structure, part of the 30S ribosomal subunit. Contacts proteins S9 and S11.

In terms of biological role, one of the primary rRNA binding proteins, it binds directly to 16S rRNA where it nucleates assembly of the head domain of the 30S subunit. Is located at the subunit interface close to the decoding center, probably blocks exit of the E-site tRNA. The protein is Small ribosomal subunit protein uS7 of Bacteroides fragilis (strain YCH46).